The sequence spans 495 residues: Transmembrane protein 161A (495 aa).

The N-terminal stretch at 1 to 28 (MALMGVQLVVSLLAVSIMQRMAPHLSFA) is a signal peptide. Over 29-99 (RWLLCNGSLL…VNVMDALVLR (71 aa)) the chain is Extracellular. A glycan (N-linked (GlcNAc...) asparagine) is linked at N34. A helical membrane pass occupies residues 100–120 (FFVEYQWLIDFAVYATGIYLF). Topologically, residues 121-135 (TEGYYSVVDASKEVN) are cytoplasmic. The helical transmembrane segment at 136–156 (IASIWCVLTVLFCLRTLYLLM) threads the bilayer. Topologically, residues 157 to 167 (SHYFLSEEGGE) are extracellular. The helical transmembrane segment at 168–188 (RSVCLAFGFLSLLIAMLVLVV) threads the bilayer. The Cytoplasmic segment spans residues 189-227 (REDYLEFGLEPGFTSLFDNFEVFARKQGYEWSVPFTKLS). A helical membrane pass occupies residues 228 to 248 (VKLGLAVICAFIGALLAFPGL). Over 249–265 (RLAQTHLDAVQMNADRP) the chain is Extracellular. A helical membrane pass occupies residues 266–286 (MIQILLHMSFLSPLVIIVMWI). The Cytoplasmic portion of the chain corresponds to 287–305 (KPIARDFLGNAPMGKTSVT). Residues 306–326 (LLSSSAFSSVRLWTIVVLCVL) traverse the membrane as a helical segment. Residues 327 to 367 (RLLLTRYHLQAYLNLAQKWVEQMKKEAGRIAAIDIQRKVTR) are Extracellular-facing. A helical transmembrane segment spans residues 368–388 (IFCYLTVVTLQYLIPILLVLF). The Cytoplasmic portion of the chain corresponds to 389 to 465 (STLALKSLGD…ALLTPIFFRG (77 aa)). A helical membrane pass occupies residues 466-486 (IFAFLTWWVAACQLISSLFGI). The Extracellular portion of the chain corresponds to 487–495 (YFHQYLMHN).

This sequence belongs to the TMEM161 family.

It is found in the membrane. In terms of biological role, may play a role in protection against oxidative stress. The sequence is that of Transmembrane protein 161A (tmem161a) from Danio rerio (Zebrafish).